The chain runs to 870 residues: DNA-directed RNA polymerase subunit Rpo1N (870 aa).

Zn(2+)-binding residues include cysteine 60, cysteine 63, cysteine 70, histidine 73, cysteine 100, cysteine 103, cysteine 146, and cysteine 149. Positions 451, 453, and 455 each coordinate Mg(2+).

This sequence belongs to the RNA polymerase beta' chain family. As to quaternary structure, part of the RNA polymerase complex. Requires Mg(2+) as cofactor. The cofactor is Zn(2+).

The protein localises to the cytoplasm. The enzyme catalyses RNA(n) + a ribonucleoside 5'-triphosphate = RNA(n+1) + diphosphate. In terms of biological role, DNA-dependent RNA polymerase (RNAP) catalyzes the transcription of DNA into RNA using the four ribonucleoside triphosphates as substrates. Forms the clamp head domain. The protein is DNA-directed RNA polymerase subunit Rpo1N of Methanothermobacter thermautotrophicus (strain ATCC 29096 / DSM 1053 / JCM 10044 / NBRC 100330 / Delta H) (Methanobacterium thermoautotrophicum).